Reading from the N-terminus, the 361-residue chain is Blue-sensitive opsin (361 aa).

Residues Met1–Leu43 lie on the Extracellular side of the membrane. Asn24 is a glycosylation site (N-linked (GlcNAc...) asparagine). Residues Phe44 to Cys68 traverse the membrane as a helical segment. The Cytoplasmic portion of the chain corresponds to Thr69–Asn80. A helical membrane pass occupies residues Tyr81–Ser106. Over Gln107–Glu120 the chain is Extracellular. A disulfide bridge links Cys117 with Cys194. The chain crosses the membrane as a helical span at residues Gly121–Phe140. Over Glu141–His159 the chain is Cytoplasmic. The chain crosses the membrane as a helical span at residues Ala160–Ser183. Topologically, residues Arg184–Ser209 are extracellular. Residues Tyr210–Leu237 traverse the membrane as a helical segment. Residues Arg238–Lys259 are Cytoplasmic-facing. The chain crosses the membrane as a helical span at residues Met260 to Val283. Residues Thr284–Glu291 are Extracellular-facing. A helical transmembrane segment spans residues Val292–Met316. N6-(retinylidene)lysine is present on Lys303. At Asn317–Ala361 the chain is on the cytoplasmic side. Residues Asp338–Ala361 are disordered. The segment covering Ser342–Ala361 has biased composition (low complexity).

It belongs to the G-protein coupled receptor 1 family. Opsin subfamily. Phosphorylated on some or all of the serine and threonine residues present in the C-terminal region. In terms of tissue distribution, the color pigments are found in the cone photoreceptor cells.

The protein resides in the membrane. In terms of biological role, visual pigments are the light-absorbing molecules that mediate vision. They consist of an apoprotein, opsin, covalently linked to cis-retinal. This chain is Blue-sensitive opsin, found in Gallus gallus (Chicken).